Consider the following 256-residue polypeptide: Autophagy-related protein 40 (256 aa).

Residues 1–16 (MFNLILWPLFLLTSVA) form the signal peptide. Over 17-67 (IPLQLTLEVVYLTSSVDFSKASAAKTATSLGQSPVVITIYKSLLKYWSLYE) the chain is Lumenal. A helical membrane pass occupies residues 68 to 88 (FIHFIYLYTPIDAFLNFLPFT). At 89-256 (SLLMSFGSIC…DILDETTELD (168 aa)) the chain is on the cytoplasmic side. A disordered region spans residues 197–243 (QPQGDKNRYQNGDRESTKNGAAYQKSSQQSSSFEQNFTSTEFPNDYD). Basic and acidic residues predominate over residues 199 to 213 (QGDKNRYQNGDREST). Residues 222–238 (SSQQSSSFEQNFTSTEF) are compositionally biased toward low complexity. The ATG8-binding signature appears at 242–245 (YDFM).

As to quaternary structure, interacts with ATG8 and ATG11.

Its subcellular location is the endoplasmic reticulum membrane. It is found in the preautophagosomal structure membrane. Functionally, acts as a receptor for reticulophagy. Directs autophagic sequestration of folded tubules/sheets derived from the cortical endoplasmic reticulum (cER) and the cytoplasmic endoplasmic reticulum (cytoER) into autophagosomes. Is not required for the cytoplasm-to-vacuole targeting pathway, mitophagy, pexophagy, and non-selective autophagy. The polypeptide is Autophagy-related protein 40 (Saccharomyces cerevisiae (strain ATCC 204508 / S288c) (Baker's yeast)).